Here is a 447-residue protein sequence, read N- to C-terminus: N-succinylarginine dihydrolase (447 aa).

Substrate is bound by residues 19-28 (AGLSFGNEAS), asparagine 110, and 137-138 (HR). The active site involves glutamate 174. Arginine 212 provides a ligand contact to substrate. Histidine 248 is a catalytic residue. The substrate site is built by aspartate 250 and asparagine 359. The active-site Nucleophile is the cysteine 365.

The protein belongs to the succinylarginine dihydrolase family. In terms of assembly, homodimer.

It carries out the reaction N(2)-succinyl-L-arginine + 2 H2O + 2 H(+) = N(2)-succinyl-L-ornithine + 2 NH4(+) + CO2. It participates in amino-acid degradation; L-arginine degradation via AST pathway; L-glutamate and succinate from L-arginine: step 2/5. Catalyzes the hydrolysis of N(2)-succinylarginine into N(2)-succinylornithine, ammonia and CO(2). The protein is N-succinylarginine dihydrolase of Escherichia coli O6:H1 (strain CFT073 / ATCC 700928 / UPEC).